Here is a 677-residue protein sequence, read N- to C-terminus: Methionine--tRNA ligase (677 aa).

The 'HIGH' region motif lies at 14 to 24 (PYANGAIHLGH). Residues Cys145, Cys148, Cys158, and Cys161 each contribute to the Zn(2+) site. Residues 330–334 (KMSKS) carry the 'KMSKS' region motif. Lys333 lines the ATP pocket. Positions 576-677 (DFAKVDLRVA…EGALPGMRVM (102 aa)) constitute a tRNA-binding domain.

This sequence belongs to the class-I aminoacyl-tRNA synthetase family. MetG type 1 subfamily. As to quaternary structure, homodimer. Requires Zn(2+) as cofactor.

It localises to the cytoplasm. The enzyme catalyses tRNA(Met) + L-methionine + ATP = L-methionyl-tRNA(Met) + AMP + diphosphate. Functionally, is required not only for elongation of protein synthesis but also for the initiation of all mRNA translation through initiator tRNA(fMet) aminoacylation. The sequence is that of Methionine--tRNA ligase from Saccharophagus degradans (strain 2-40 / ATCC 43961 / DSM 17024).